Here is a 319-residue protein sequence, read N- to C-terminus: Transaldolase (319 aa).

The active-site Schiff-base intermediate with substrate is lysine 125.

The protein belongs to the transaldolase family. Type 1 subfamily. As to quaternary structure, homodimer.

It localises to the cytoplasm. It carries out the reaction D-sedoheptulose 7-phosphate + D-glyceraldehyde 3-phosphate = D-erythrose 4-phosphate + beta-D-fructose 6-phosphate. The protein operates within carbohydrate degradation; pentose phosphate pathway; D-glyceraldehyde 3-phosphate and beta-D-fructose 6-phosphate from D-ribose 5-phosphate and D-xylulose 5-phosphate (non-oxidative stage): step 2/3. In terms of biological role, transaldolase is important for the balance of metabolites in the pentose-phosphate pathway. The sequence is that of Transaldolase from Ralstonia pickettii (strain 12J).